We begin with the raw amino-acid sequence, 254 residues long: Phosphoribosylaminoimidazole-succinocarboxamide synthase (254 aa).

Belongs to the SAICAR synthetase family.

The catalysed reaction is 5-amino-1-(5-phospho-D-ribosyl)imidazole-4-carboxylate + L-aspartate + ATP = (2S)-2-[5-amino-1-(5-phospho-beta-D-ribosyl)imidazole-4-carboxamido]succinate + ADP + phosphate + 2 H(+). It functions in the pathway purine metabolism; IMP biosynthesis via de novo pathway; 5-amino-1-(5-phospho-D-ribosyl)imidazole-4-carboxamide from 5-amino-1-(5-phospho-D-ribosyl)imidazole-4-carboxylate: step 1/2. The sequence is that of Phosphoribosylaminoimidazole-succinocarboxamide synthase from Brucella abortus (strain S19).